The sequence spans 277 residues: uncharacterized protein (277 aa).

The tract at residues 256–277 (HTTTTTTSPSFTIPSNSSKGVS) is disordered.

In terms of biological role, this protein may be involved in virus assembly. Essential for virus function. This is an uncharacterized protein from Saccharolobus solfataricus (Sulfolobus solfataricus).